The following is a 396-amino-acid chain: Probable sugar efflux transporter (396 aa).

Transmembrane regions (helical) follow at residues 15–35 (VVTLAIAAFIFNTTEFVPVGL), 50–70 (VGIMLTIYAWVVAVMSLPFML), 81–101 (LICLFVLFIASHVLSFLAWNF), 103–123 (VLVISRIGIAFAHAIFWSITA), 136–156 (AQALSLIATGTALAMVLGLPI), 169–189 (TFFAIGMGALITLLCLIKLLP), 209–229 (PALMSLYVLTVVVVTAHYTAY), 246–266 (FATVLLLILGGAGIIGSLVFG), 275–295 (SLVSIAIALLVVCLLLLLPAA), 301–321 (LAILSIFWGIAIMVIGLGMQV), 333–353 (VAMALFSGIFNIGIGAGALVG), and 364–384 (AIGYIGAIPACAALVWAVLIF).

The protein belongs to the major facilitator superfamily. SotB (TC 2.A.1.2) family.

It localises to the cell inner membrane. Its function is as follows. Involved in the efflux of sugars. The physiological role may be the reduction of the intracellular concentration of toxic sugars or sugar metabolites. This Salmonella agona (strain SL483) protein is Probable sugar efflux transporter.